The following is an 80-amino-acid chain: CLAVATA3/ESR (CLE)-related protein 14 (80 aa).

The signal sequence occupies residues 1 to 26 (MKVWSQRLSFLIVMIFILAGLHSSSA). Residues Pro-71 and Pro-74 each carry the hydroxyproline modification. The O-linked (Ara...) hydroxyproline glycan is linked to Pro-74.

Belongs to the CLV3/ESR signal peptide family. As to quaternary structure, interacts with the extracellular leucine-rich repeat region of CLV2 and PEPR2. Post-translationally, the O-glycosylation (arabinosylation) of the hydroxyproline Pro-74 enhances binding affinity of the CLE14p peptide for its receptor. Mostly expressed in roots, and, to a lower extent, in seedlings and leaves. Expressed in the primary root tip under Pi deficiency.

The protein localises to the secreted. The protein resides in the extracellular space. In terms of biological role, extracellular signal peptide that regulates cell fate. Represses root apical meristem maintenance. Acts as an elicitor of the root meristem differentiation through the CLV2/CRN complex signaling pathway. Inhibits irreversibly root growth by reducing cell division rates in the root apical meristem. Regulates the transition of protophloem cells from proliferation to differentiation, thus impinging on postembryonic growth capacity of the root meristem; this signaling pathway requires CRN and CLV2. This Arabidopsis thaliana (Mouse-ear cress) protein is CLAVATA3/ESR (CLE)-related protein 14.